The chain runs to 418 residues: Tyrosine--tRNA ligase (418 aa).

L-tyrosine is bound at residue Tyr-34. The 'HIGH' region motif lies at 39–48 (PTADSLHLGH). Residues Tyr-169 and Gln-173 each coordinate L-tyrosine. The short motif at 229–233 (KFGKS) is the 'KMSKS' region element. Lys-232 is an ATP binding site. The S4 RNA-binding domain occupies 352-418 (NNIVELLVSS…GKKKYFVLTY (67 aa)).

It belongs to the class-I aminoacyl-tRNA synthetase family. TyrS type 1 subfamily. In terms of assembly, homodimer.

The protein localises to the cytoplasm. It catalyses the reaction tRNA(Tyr) + L-tyrosine + ATP = L-tyrosyl-tRNA(Tyr) + AMP + diphosphate + H(+). Its function is as follows. Catalyzes the attachment of tyrosine to tRNA(Tyr) in a two-step reaction: tyrosine is first activated by ATP to form Tyr-AMP and then transferred to the acceptor end of tRNA(Tyr). The sequence is that of Tyrosine--tRNA ligase from Streptococcus pneumoniae (strain Taiwan19F-14).